The chain runs to 857 residues: Protein STICHEL-like 2 (857 aa).

280 to 287 (GPRGTGKT) is an ATP binding site. The Zn(2+) site is built by Cys-299, Cys-309, Cys-312, and Cys-315. A coiled-coil region spans residues 544 to 576 (LTRHTSEEEMQKLRNALKILSDAEKHLRASKNQ). Disordered regions lie at residues 593 to 629 (SSFA…DAEK) and 787 to 845 (ASSR…SSRL). The span at 599–610 (ENGRNQINKDVE) shows a compositional bias: basic and acidic residues. The segment covering 834–843 (QSETQNSKSS) has biased composition (polar residues).

Belongs to the DnaX/STICHEL family.

The chain is Protein STICHEL-like 2 from Arabidopsis thaliana (Mouse-ear cress).